Here is a 159-residue protein sequence, read N- to C-terminus: Dihydrofolate reductase (159 aa).

The 156-residue stretch at 2–157 folds into the DHFR domain; that stretch reads TLSILVAHDL…IPHTFLHLIR (156 aa). 6–8 lines the substrate pocket; sequence LVA. NADP(+) contacts are provided by residues 7-8 and 15-20; these read VA and IGFENQ. Asp28 lines the substrate pocket. 44–47 provides a ligand contact to NADP(+); it reads GRKT. Substrate is bound at residue Arg58. Residues 63-66 and 93-98 contribute to the NADP(+) site; these read LTSD and FGGQIL. Substrate is bound at residue Thr112.

It belongs to the dihydrofolate reductase family.

The catalysed reaction is (6S)-5,6,7,8-tetrahydrofolate + NADP(+) = 7,8-dihydrofolate + NADPH + H(+). It participates in cofactor biosynthesis; tetrahydrofolate biosynthesis; 5,6,7,8-tetrahydrofolate from 7,8-dihydrofolate: step 1/1. In terms of biological role, key enzyme in folate metabolism. Catalyzes an essential reaction for de novo glycine and purine synthesis, and for DNA precursor synthesis. The sequence is that of Dihydrofolate reductase (folA) from Staphylococcus aureus (strain MW2).